The following is a 480-amino-acid chain: Glycerol 3-phosphate dehydrogenase (480 aa).

Residues Ile-12, Glu-31, 40 to 41 (TT), and 45 to 47 (SAI) contribute to the FAD site. Sn-glycerol 3-phosphate is bound by residues Ser-45 and His-49. Catalysis depends on His-49, which acts as the Proton acceptor. Val-172 lines the FAD pocket. Lys-249 and Arg-310 together coordinate sn-glycerol 3-phosphate. Residue 335–336 (IE) participates in FAD binding. Position 337 (Ser-337) interacts with sn-glycerol 3-phosphate. FAD is bound at residue Ser-341. The [2Fe-2S] cluster site is built by Cys-400, Cys-402, Cys-437, and Cys-442.

It depends on [2Fe-2S] cluster as a cofactor.

The enzyme catalyses sn-glycerol 3-phosphate + A = dihydroxyacetone phosphate + AH2. Its pathway is polyol metabolism; glycerol degradation via glycerol kinase pathway; glycerone phosphate from sn-glycerol 3-phosphate (aerobic route): step 1/1. In terms of biological role, catalyzes the dehydrogenation of glycerol 3-phosphate to dihydroxyacetone phosphate. Is probably involved in anaerobic glycerol metabolism. Active in vitro with the artificial electron acceptor 2,6-dichlorophenolindophenol (DCPIP), but not with NAD or NADP. Also displays a very low oxidase activity in vitro on glycerol 3-phosphate with O2 as the electron acceptor, but this activity is most likely not physiological. The polypeptide is Glycerol 3-phosphate dehydrogenase (Caloramator mitchellensis).